The following is a 125-amino-acid chain: Histone H2B (125 aa).

The tract at residues 1–32 (MAPKVRAAKKGEKRVGKAKSGTAETAKRRRGK) is disordered. An O-linked (GlcNAc) serine glycan is attached at S112. K120 is covalently cross-linked (Glycyl lysine isopeptide (Lys-Gly) (interchain with G-Cter in ubiquitin)).

Belongs to the histone H2B family. As to quaternary structure, the nucleosome is a histone octamer containing two molecules each of H2A, H2B, H3 and H4 assembled in one H3-H4 heterotetramer and two H2A-H2B heterodimers. The octamer wraps approximately 147 bp of DNA. Post-translationally, monoubiquitination of Lys-120 gives a specific tag for epigenetic transcriptional activation and is also prerequisite for histone H3 'Lys-4' and 'Lys-79' methylation. GlcNAcylation at Ser-112 promotes monoubiquitination of Lys-120. It fluctuates in response to extracellular glucose, and associates with transcribed genes.

The protein resides in the nucleus. The protein localises to the chromosome. In terms of biological role, core component of nucleosome. Nucleosomes wrap and compact DNA into chromatin, limiting DNA accessibility to the cellular machineries which require DNA as a template. Histones thereby play a central role in transcription regulation, DNA repair, DNA replication and chromosomal stability. DNA accessibility is regulated via a complex set of post-translational modifications of histones, also called histone code, and nucleosome remodeling. The chain is Histone H2B from Acropora formosa (Staghorn coral).